We begin with the raw amino-acid sequence, 336 residues long: SCP domain-containing protein 1 (336 aa).

An N-terminal signal peptide occupies residues 1–18; it reads MEFKLLLVLCFNIGLICS. Asn-47 carries an N-linked (GlcNAc...) asparagine glycan. Residues 73 to 85 show a composition bias toward polar residues; that stretch reads QGGNTAPSSSLPG. Residues 73-94 are disordered; the sequence is QGGNTAPSSSLPGVSSMPMPSA. The 118-residue stretch at 175-292 folds into the SCP domain; the sequence is LEEHNKFRSD…YCGDMSFIAC (118 aa). Residues Asn-213 and Asn-257 are each glycosylated (N-linked (GlcNAc...) asparagine).

Component of the acid-insoluble and acid-soluble organic matrix of calcified layers of the shell (at protein level).

It is found in the secreted. The sequence is that of SCP domain-containing protein 1 from Lottia gigantea (Giant owl limpet).